Reading from the N-terminus, the 127-residue chain is Methylglyoxal synthase (127 aa).

An MGS-like domain is found at 1–127 (MEKKIALIAH…IKGLESLILR (127 aa)). Substrate is bound by residues His-10, Lys-14, 36–39 (TGTT), and 56–57 (SG). Asp-62 functions as the Proton donor/acceptor in the catalytic mechanism. His-89 is a substrate binding site.

It belongs to the methylglyoxal synthase family.

The enzyme catalyses dihydroxyacetone phosphate = methylglyoxal + phosphate. In terms of biological role, catalyzes the formation of methylglyoxal from dihydroxyacetone phosphate. The chain is Methylglyoxal synthase from Borreliella afzelii (strain PKo) (Borrelia afzelii).